Here is a 61-residue protein sequence, read N- to C-terminus: Small ribosomal subunit protein uS14 (61 aa).

Zn(2+) contacts are provided by C24, C27, C40, and C43.

It belongs to the universal ribosomal protein uS14 family. Zinc-binding uS14 subfamily. As to quaternary structure, part of the 30S ribosomal subunit. Contacts proteins S3 and S10. The cofactor is Zn(2+).

Its function is as follows. Binds 16S rRNA, required for the assembly of 30S particles and may also be responsible for determining the conformation of the 16S rRNA at the A site. This is Small ribosomal subunit protein uS14 from Natranaerobius thermophilus (strain ATCC BAA-1301 / DSM 18059 / JW/NM-WN-LF).